The sequence spans 178 residues: HTH-type transcriptional regulator SutR (178 aa).

One can recognise an HTH cro/C1-type domain in the interval 12–66; that stretch reads LKQLRQQRGWSLSRLAEATGVSKAMLGQIERNESSPTVATLWKIATGLNVPFSTF. Positions 23-42 form a DNA-binding region, H-T-H motif; the sequence is LSRLAEATGVSKAMLGQIER. The region spanning 105–171 is the Cupin type-2 domain; it reads QMASGAISES…GGEQTVHFHS (67 aa).

Its function is as follows. Regulates the expression of 12-16 transcription units involved in various steps of sulfur utilization. Represses expression of pfkB, fliZ, cysE, ydcO and its own expression. Activates expression of ypfN. Acts by binding to SutR boxes. The sequence is that of HTH-type transcriptional regulator SutR from Escherichia coli (strain K12).